A 425-amino-acid chain; its full sequence is UPF0597 protein VSAL_I0741 (425 aa).

This sequence belongs to the UPF0597 family.

This is UPF0597 protein VSAL_I0741 from Aliivibrio salmonicida (strain LFI1238) (Vibrio salmonicida (strain LFI1238)).